The sequence spans 170 residues: tRNA-splicing endonuclease (170 aa).

Catalysis depends on residues Tyr110, His116, and Lys147.

It belongs to the tRNA-intron endonuclease family. Archaeal short subfamily. Homotetramer; although the tetramer contains four active sites, only two participate in the cleavage. Therefore, it should be considered as a dimer of dimers.

The catalysed reaction is pretRNA = a 3'-half-tRNA molecule with a 5'-OH end + a 5'-half-tRNA molecule with a 2',3'-cyclic phosphate end + an intron with a 2',3'-cyclic phosphate and a 5'-hydroxyl terminus.. In terms of biological role, endonuclease that removes tRNA introns. Cleaves pre-tRNA at the 5'- and 3'-splice sites to release the intron. The products are an intron and two tRNA half-molecules bearing 2',3' cyclic phosphate and 5'-OH termini. Recognizes a pseudosymmetric substrate in which 2 bulged loops of 3 bases are separated by a stem of 4 bp. The protein is tRNA-splicing endonuclease of Pyrococcus horikoshii (strain ATCC 700860 / DSM 12428 / JCM 9974 / NBRC 100139 / OT-3).